The following is a 136-amino-acid chain: Small ribosomal subunit protein eS12 (136 aa).

Belongs to the eukaryotic ribosomal protein eS12 family.

In Dictyostelium discoideum (Social amoeba), this protein is Small ribosomal subunit protein eS12 (rps12).